Consider the following 294-residue polypeptide: tRNA pseudouridine synthase B (294 aa).

Asp-38 serves as the catalytic Nucleophile.

It belongs to the pseudouridine synthase TruB family. Type 1 subfamily.

The catalysed reaction is uridine(55) in tRNA = pseudouridine(55) in tRNA. Functionally, responsible for synthesis of pseudouridine from uracil-55 in the psi GC loop of transfer RNAs. This is tRNA pseudouridine synthase B from Clostridium perfringens (strain 13 / Type A).